Reading from the N-terminus, the 409-residue chain is Elongation factor Tu, plastid (409 aa).

In terms of domain architecture, tr-type G spans lysine 10–valine 214. The interval glycine 19–threonine 26 is G1. GTP is bound at residue glycine 19 to threonine 26. A Mg(2+)-binding site is contributed by threonine 26. Positions glycine 60–asparagine 64 are G2. The interval aspartate 81–glycine 84 is G3. GTP is bound by residues aspartate 81 to histidine 85 and asparagine 136 to aspartate 139. The interval asparagine 136–aspartate 139 is G4. The segment at serine 174–leucine 176 is G5.

This sequence belongs to the TRAFAC class translation factor GTPase superfamily. Classic translation factor GTPase family. EF-Tu/EF-1A subfamily.

It is found in the plastid. The enzyme catalyses GTP + H2O = GDP + phosphate + H(+). Functionally, GTP hydrolase that promotes the GTP-dependent binding of aminoacyl-tRNA to the A-site of ribosomes during protein biosynthesis. This chain is Elongation factor Tu, plastid (tufA), found in Helicosporidium sp. subsp. Simulium jonesii (Green alga).